Consider the following 238-residue polypeptide: Ribonuclease PH (238 aa).

Residues arginine 86 and 124–126 (GTR) each bind phosphate.

It belongs to the RNase PH family. In terms of assembly, homohexameric ring arranged as a trimer of dimers.

The enzyme catalyses tRNA(n+1) + phosphate = tRNA(n) + a ribonucleoside 5'-diphosphate. Functionally, phosphorolytic 3'-5' exoribonuclease that plays an important role in tRNA 3'-end maturation. Removes nucleotide residues following the 3'-CCA terminus of tRNAs; can also add nucleotides to the ends of RNA molecules by using nucleoside diphosphates as substrates, but this may not be physiologically important. Probably plays a role in initiation of 16S rRNA degradation (leading to ribosome degradation) during starvation. This chain is Ribonuclease PH, found in Salmonella agona (strain SL483).